We begin with the raw amino-acid sequence, 210 residues long: Chloramphenicol acetyltransferase (210 aa).

The active site involves H79.

It belongs to the transferase hexapeptide repeat family.

The catalysed reaction is chloramphenicol + acetyl-CoA = chloramphenicol 3-acetate + CoA. This enzyme is an effector of chloramphenicol resistance in bacteria. The polypeptide is Chloramphenicol acetyltransferase (catB2) (Escherichia coli).